The primary structure comprises 300 residues: MYEWHWHIEWQTPYEFHGHAITKVIAEEKTPYQRALLVELARFGKALILDGKIQSTITDEFIYHEALVHPLLLSINNPEKILILGGGEGATLREVLKHKTIKNVTMVDIDPVVIDFAKKYLQEWHQGAFDNPKSKLVIEDGYKFIKETKEKFDAVVIDLTDPIKDSPSQMLYTKEFYEEVKRISKWGIVTQATSPSFSLETFSIIYNTIKHVFKKVSAGITYVPAFDGLWGFVYASDEVNPAEFSKEEINNRIKERIDGSLRFYDGETHITMFSIPKHIREVLEKENKISTRENPVAVPA.

The 234-residue stretch at 4–237 folds into the PABS domain; that stretch reads WHWHIEWQTP…GLWGFVYASD (234 aa). Gln-33 provides a ligand contact to S-methyl-5'-thioadenosine. Spermidine is bound by residues His-64 and Glu-88. S-methyl-5'-thioadenosine contacts are provided by residues Asp-108 and 140 to 141; that span reads DG. The Proton acceptor role is filled by Asp-158. Pro-167 contributes to the S-methyl-5'-thioadenosine binding site.

It belongs to the spermidine/spermine synthase family. As to quaternary structure, homodimer or homotetramer.

It localises to the cytoplasm. The enzyme catalyses S-adenosyl 3-(methylsulfanyl)propylamine + putrescine = S-methyl-5'-thioadenosine + spermidine + H(+). Its pathway is amine and polyamine biosynthesis; spermidine biosynthesis; spermidine from putrescine: step 1/1. Its function is as follows. Catalyzes the irreversible transfer of a propylamine group from the amino donor S-adenosylmethioninamine (decarboxy-AdoMet) to putrescine (1,4-diaminobutane) to yield spermidine. This chain is Polyamine aminopropyltransferase, found in Sulfurisphaera tokodaii (strain DSM 16993 / JCM 10545 / NBRC 100140 / 7) (Sulfolobus tokodaii).